The primary structure comprises 489 residues: Long chain base biosynthesis protein 2a (489 aa).

A helical transmembrane segment spans residues 2–22; the sequence is ITIPYLTAVSTYFSYGLLFAF. Residue Lys311 is modified to N6-(pyridoxal phosphate)lysine.

This sequence belongs to the class-II pyridoxal-phosphate-dependent aminotransferase family. As to quaternary structure, heterodimer with LCB1. Component of the serine palmitoyltransferase (SPT) complex, composed of LCB1 and LCB2 (LCB2a or LCB2b). The cofactor is pyridoxal 5'-phosphate. In terms of tissue distribution, ubiquitous. Detected in leaves, roots, stems, flowers and at a lower level in mature seeds.

The protein localises to the endoplasmic reticulum membrane. It carries out the reaction L-serine + hexadecanoyl-CoA + H(+) = 3-oxosphinganine + CO2 + CoA. The protein operates within lipid metabolism; sphingolipid metabolism. Its function is as follows. Serine palmitoyltransferase (SPT). The heterodimer formed with LCB1 constitutes the catalytic core. Involved in the regulation of the programmed cell death (PCD) signaling pathway. Plays an important role during male gametogenesis and embryogenesis. The polypeptide is Long chain base biosynthesis protein 2a (LCB2a) (Arabidopsis thaliana (Mouse-ear cress)).